The chain runs to 56 residues: Pituitary adenylate cyclase-activating polypeptide (56 aa).

An important for receptor binding region spans residues 42–50 (VKKYLAAVL). Residue Leu-50 is modified to Leucine amide.

Belongs to the glucagon family. In terms of assembly, interacts with ADCYAP1R1 (via N-terminal extracellular domain).

It localises to the secreted. PACAP is a neuropeptide involved in diverse array of physiological processes through activating the PACAP subfamily of class B1 G protein-coupled receptors: VIP receptor 1 (VIPR1), VIP receptor 2 (VIPR2), and PACAP type I receptor (ADCYAP1R1). Exerts neuroprotective and general cytoprotective effects due to anti-apoptotic, anti-inflammatory, and antioxidant actions. The protein is Pituitary adenylate cyclase-activating polypeptide (Adcyap1) of Heloderma suspectum (Gila monster).